Consider the following 450-residue polypeptide: Tubulin alpha-2 chain (450 aa).

Residue Gln11 participates in GTP binding. Residue Lys40 is modified to N6-acetyllysine. 6 residues coordinate GTP: Glu71, Gly144, Thr145, Thr179, Asn206, and Asn228. Glu71 contacts Mg(2+). Glu254 is an active-site residue.

It belongs to the tubulin family. As to quaternary structure, dimer of alpha and beta chains. A typical microtubule is a hollow water-filled tube with an outer diameter of 25 nm and an inner diameter of 15 nM. Alpha-beta heterodimers associate head-to-tail to form protofilaments running lengthwise along the microtubule wall with the beta-tubulin subunit facing the microtubule plus end conferring a structural polarity. Microtubules usually have 13 protofilaments but different protofilament numbers can be found in some organisms and specialized cells. It depends on Mg(2+) as a cofactor. In terms of processing, undergoes a tyrosination/detyrosination cycle, the cyclic removal and re-addition of a C-terminal tyrosine residue by the enzymes tubulin tyrosine carboxypeptidase (TTCP) and tubulin tyrosine ligase (TTL), respectively. Acetylation of alpha chains at Lys-40 stabilizes microtubules and affects affinity and processivity of microtubule motors. This modification has a role in multiple cellular functions, ranging from cell motility, cell cycle progression or cell differentiation to intracellular trafficking and signaling.

Its subcellular location is the cytoplasm. It is found in the cytoskeleton. The enzyme catalyses GTP + H2O = GDP + phosphate + H(+). Functionally, tubulin is the major constituent of microtubules, a cylinder consisting of laterally associated linear protofilaments composed of alpha- and beta-tubulin heterodimers. Microtubules grow by the addition of GTP-tubulin dimers to the microtubule end, where a stabilizing cap forms. Below the cap, tubulin dimers are in GDP-bound state, owing to GTPase activity of alpha-tubulin. The polypeptide is Tubulin alpha-2 chain (Gossypium hirsutum (Upland cotton)).